The following is a 57-amino-acid chain: RPSFCNLPVKPGPCNGFFSAFYYSQKKNKCHSFTYGGCKGNANRFSTIEECRRTCVG.

In terms of domain architecture, BPTI/Kunitz inhibitor spans 5–55; it reads CNLPVKPGPCNGFFSAFYYSQKKNKCHSFTYGGCKGNANRFSTIEECRRTC. 3 disulfides stabilise this stretch: cysteine 5–cysteine 55, cysteine 14–cysteine 38, and cysteine 30–cysteine 51.

The protein belongs to the venom Kunitz-type family. In terms of tissue distribution, expressed by the venom gland.

The protein localises to the secreted. Interacts with vasopressin V2 receptor (V2R/AVPR2), probably in a selective manner. Inhibits vasopressin binding human V2R in the nanomolar range (Ki=13.3 nM), and also moderately inhibits vasopressin-induced cAMP production (IC(50)=453 nM). In vivo, intraperitoneal injection of this protein into rats increases diuresis by 4.5-fold, without any loss of electrolytes. The chain is Mambaquaretin-3 from Dendroaspis polylepis polylepis (Black mamba).